The sequence spans 462 residues: tRNA modification GTPase MnmE (462 aa).

Residues arginine 22, glutamate 87, and arginine 126 each coordinate (6S)-5-formyl-5,6,7,8-tetrahydrofolate. One can recognise a TrmE-type G domain in the interval 220-382 (GLKVAIVGRP…LARKVQEIVL (163 aa)). Position 230 (asparagine 230) interacts with K(+). Residues 230 to 235 (NVGKSS), 249 to 255 (SNIPGTT), and 274 to 277 (DTAG) contribute to the GTP site. Serine 234 provides a ligand contact to Mg(2+). K(+) is bound by residues serine 249, isoleucine 251, and threonine 254. Threonine 255 contributes to the Mg(2+) binding site. Lysine 462 lines the (6S)-5-formyl-5,6,7,8-tetrahydrofolate pocket.

Belongs to the TRAFAC class TrmE-Era-EngA-EngB-Septin-like GTPase superfamily. TrmE GTPase family. As to quaternary structure, homodimer. Heterotetramer of two MnmE and two MnmG subunits. K(+) is required as a cofactor.

It is found in the cytoplasm. In terms of biological role, exhibits a very high intrinsic GTPase hydrolysis rate. Involved in the addition of a carboxymethylaminomethyl (cmnm) group at the wobble position (U34) of certain tRNAs, forming tRNA-cmnm(5)s(2)U34. This Moorella thermoacetica (strain ATCC 39073 / JCM 9320) protein is tRNA modification GTPase MnmE.